A 331-amino-acid polypeptide reads, in one-letter code: Probable 5-dehydro-4-deoxyglucarate dehydratase 2 (331 aa).

The interval 1–23 is disordered; the sequence is MSADTDTDTDTGTGTGPDTDTGT. Residues 10–23 show a composition bias toward low complexity; the sequence is DTGTGTGPDTDTGT.

The protein belongs to the DapA family.

It catalyses the reaction 5-dehydro-4-deoxy-D-glucarate + H(+) = 2,5-dioxopentanoate + CO2 + H2O. The protein operates within carbohydrate acid metabolism; D-glucarate degradation; 2,5-dioxopentanoate from D-glucarate: step 2/2. The sequence is that of Probable 5-dehydro-4-deoxyglucarate dehydratase 2 from Streptomyces avermitilis (strain ATCC 31267 / DSM 46492 / JCM 5070 / NBRC 14893 / NCIMB 12804 / NRRL 8165 / MA-4680).